A 298-amino-acid chain; its full sequence is Protoheme IX farnesyltransferase (298 aa).

9 helical membrane-spanning segments follow: residues 19 to 39 (VMSL…QPVN), 40 to 60 (PFVA…SGAL), 91 to 111 (LAVG…GGNW), 112 to 132 (FAAG…TIWL), 140 to 160 (IVIG…LPTG), 167 to 187 (LLMF…LALF), 213 to 233 (IFAY…TSVG), 236 to 256 (LYLA…WQIL), and 277 to 297 (LSLY…WVGG).

Belongs to the UbiA prenyltransferase family. Protoheme IX farnesyltransferase subfamily. As to quaternary structure, interacts with CtaA.

It localises to the cell inner membrane. The enzyme catalyses heme b + (2E,6E)-farnesyl diphosphate + H2O = Fe(II)-heme o + diphosphate. It functions in the pathway porphyrin-containing compound metabolism; heme O biosynthesis; heme O from protoheme: step 1/1. In terms of biological role, converts heme B (protoheme IX) to heme O by substitution of the vinyl group on carbon 2 of heme B porphyrin ring with a hydroxyethyl farnesyl side group. In Paracoccus denitrificans, this protein is Protoheme IX farnesyltransferase.